The sequence spans 107 residues: Nucleoid-associated protein RC1337 (107 aa).

Belongs to the YbaB/EbfC family. Homodimer.

It is found in the cytoplasm. The protein localises to the nucleoid. In terms of biological role, binds to DNA and alters its conformation. May be involved in regulation of gene expression, nucleoid organization and DNA protection. This Rickettsia conorii (strain ATCC VR-613 / Malish 7) protein is Nucleoid-associated protein RC1337.